A 430-amino-acid polypeptide reads, in one-letter code: 3-phosphoshikimate 1-carboxyvinyltransferase (430 aa).

The disordered stretch occupies residues 1–20 (MHATVSPSRVRGRARAPPSK). 3-phosphoshikimate is bound by residues Lys20, Ser21, and Arg25. Lys20 serves as a coordination point for phosphoenolpyruvate. 2 residues coordinate phosphoenolpyruvate: Gly91 and Arg119. 3-phosphoshikimate is bound by residues Ser164, Ser165, Gln166, Ser192, Asp312, and Lys339. Residue Gln166 participates in phosphoenolpyruvate binding. Asp312 acts as the Proton acceptor in catalysis. The phosphoenolpyruvate site is built by Arg343 and Arg386.

Belongs to the EPSP synthase family. Monomer.

It is found in the cytoplasm. It catalyses the reaction 3-phosphoshikimate + phosphoenolpyruvate = 5-O-(1-carboxyvinyl)-3-phosphoshikimate + phosphate. Its pathway is metabolic intermediate biosynthesis; chorismate biosynthesis. Functionally, catalyzes the transfer of the enolpyruvyl moiety of phosphoenolpyruvate (PEP) to the 5-hydroxyl of shikimate-3-phosphate (S3P) to produce enolpyruvyl shikimate-3-phosphate and inorganic phosphate. This chain is 3-phosphoshikimate 1-carboxyvinyltransferase, found in Halobacterium salinarum (strain ATCC 29341 / DSM 671 / R1).